A 465-amino-acid chain; its full sequence is Glutamyl-tRNA reductase 2 (465 aa).

Substrate is bound by residues 62–65 (TCNR), Ser122, 127–129 (EGQ), and Gln133. Cys63 (nucleophile) is an active-site residue. 204–209 (GAGKMG) is a binding site for NADP(+).

It belongs to the glutamyl-tRNA reductase family.

Its subcellular location is the plastid. The protein resides in the chloroplast. It catalyses the reaction (S)-4-amino-5-oxopentanoate + tRNA(Glu) + NADP(+) = L-glutamyl-tRNA(Glu) + NADPH + H(+). Its pathway is porphyrin-containing compound metabolism; protoporphyrin-IX biosynthesis; 5-aminolevulinate from L-glutamyl-tRNA(Glu): step 1/2. Its function is as follows. Catalyzes the NADPH-dependent reduction of glutamyl-tRNA(Glu) to glutamate 1-semialdehyde (GSA). In Hordeum vulgare (Barley), this protein is Glutamyl-tRNA reductase 2 (HEMA2).